Reading from the N-terminus, the 351-residue chain is Phospho-N-acetylmuramoyl-pentapeptide-transferase (351 aa).

The next 10 membrane-spanning stretches (helical) occupy residues M17–L37, G62–W82, I85–F105, F124–G144, I161–S181, G190–T210, L230–Y250, I254–I274, I279–V299, and Q328–I348.

This sequence belongs to the glycosyltransferase 4 family. MraY subfamily. Mg(2+) is required as a cofactor.

The protein resides in the cell inner membrane. The catalysed reaction is UDP-N-acetyl-alpha-D-muramoyl-L-alanyl-gamma-D-glutamyl-meso-2,6-diaminopimeloyl-D-alanyl-D-alanine + di-trans,octa-cis-undecaprenyl phosphate = di-trans,octa-cis-undecaprenyl diphospho-N-acetyl-alpha-D-muramoyl-L-alanyl-D-glutamyl-meso-2,6-diaminopimeloyl-D-alanyl-D-alanine + UMP. It participates in cell wall biogenesis; peptidoglycan biosynthesis. Its function is as follows. Catalyzes the initial step of the lipid cycle reactions in the biosynthesis of the cell wall peptidoglycan: transfers peptidoglycan precursor phospho-MurNAc-pentapeptide from UDP-MurNAc-pentapeptide onto the lipid carrier undecaprenyl phosphate, yielding undecaprenyl-pyrophosphoryl-MurNAc-pentapeptide, known as lipid I. This is Phospho-N-acetylmuramoyl-pentapeptide-transferase from Borrelia garinii subsp. bavariensis (strain ATCC BAA-2496 / DSM 23469 / PBi) (Borreliella bavariensis).